The chain runs to 166 residues: Ribonuclease H (166 aa).

Residues 5–147 (PRKRVALFTD…VDREARRQAQ (143 aa)) enclose the RNase H type-1 domain. Residues Asp14, Glu52, Asp74, and Asp139 each contribute to the Mg(2+) site. The disordered stretch occupies residues 128–166 (GHTGHPENERVDREARRQAQSQAKTPCPPQAPTLFHEEA). The segment covering 131 to 144 (GHPENERVDREARR) has biased composition (basic and acidic residues).

Belongs to the RNase H family. Monomer. Requires Mg(2+) as cofactor.

Its subcellular location is the cytoplasm. It carries out the reaction Endonucleolytic cleavage to 5'-phosphomonoester.. Endonuclease that specifically degrades the RNA of RNA-DNA hybrids. The protein is Ribonuclease H of Thermus thermophilus (strain ATCC BAA-163 / DSM 7039 / HB27).